Reading from the N-terminus, the 257-residue chain is Putative carboxymethylenebutenolidase (257 aa).

Catalysis depends on residues cysteine 148, aspartate 195, and histidine 226.

Belongs to the dienelactone hydrolase family.

It carries out the reaction 2-(5-oxo-2,5-dihydrofuran-2-ylidene)acetate + H2O = 4-oxohex-2-enedioate + H(+). The sequence is that of Putative carboxymethylenebutenolidase from Saccharolobus solfataricus (strain ATCC 35092 / DSM 1617 / JCM 11322 / P2) (Sulfolobus solfataricus).